The following is a 591-amino-acid chain: Coiled-coil domain-containing protein 148 (591 aa).

3 coiled-coil regions span residues 166–195, 352–417, and 466–498; these read VKKQLKTVFERLRLEQQRIENDLSDWSIKI, MLAK…KKKK, and ERRLMEKKEVALQEAHEDKERARRLEALRKQVA.

This Homo sapiens (Human) protein is Coiled-coil domain-containing protein 148 (CCDC148).